Reading from the N-terminus, the 375-residue chain is MICPVIDLAQQLIKRPSLSPNDAGCQEIMIQRLEAIGFTVEPMNFGDTLNFWAWRGEGETLAFAGHTDVVPTGDESHWCSPPFEPTIRDGMLYGRGAADMKGSLAAMVVAAERFVAAHPNHKGRLAFMITSDEEAKAINGTVKVVNALMARHERLDYCLVGEPSSTDRVGDVVKNGRRGSITANLHIHGIQGHVAYPHLADNPVHRAIPALNELVTTQWDEGNEFFPATSMQIANLHAGTGSNNVIPGEFYVQFNFRFSTELTDSMIKQRVEALLERHQLDYTLEWVLSGQPFLTARGALVDAVVNAVEHYAEITPQLLTTGGTSDGRFIALMGAQVVELGPVNATIHKVNECVHAADLQLLSRMYQKIMEQLIA.

H66 lines the Zn(2+) pocket. Residue D68 is part of the active site. A Zn(2+)-binding site is contributed by D99. The active-site Proton acceptor is E133. The Zn(2+) site is built by E134, E162, and H348.

The protein belongs to the peptidase M20A family. DapE subfamily. Homodimer. Requires Zn(2+) as cofactor. It depends on Co(2+) as a cofactor.

The enzyme catalyses N-succinyl-(2S,6S)-2,6-diaminopimelate + H2O = (2S,6S)-2,6-diaminopimelate + succinate. It participates in amino-acid biosynthesis; L-lysine biosynthesis via DAP pathway; LL-2,6-diaminopimelate from (S)-tetrahydrodipicolinate (succinylase route): step 3/3. Its function is as follows. Catalyzes the hydrolysis of N-succinyl-L,L-diaminopimelic acid (SDAP), forming succinate and LL-2,6-diaminopimelate (DAP), an intermediate involved in the bacterial biosynthesis of lysine and meso-diaminopimelic acid, an essential component of bacterial cell walls. The protein is Succinyl-diaminopimelate desuccinylase of Yersinia enterocolitica serotype O:8 / biotype 1B (strain NCTC 13174 / 8081).